The following is a 111-amino-acid chain: Cell cycle protein GpsB (111 aa).

Residues Ile38–Val72 adopt a coiled-coil conformation.

The protein belongs to the GpsB family. As to quaternary structure, forms polymers through the coiled coil domains. Interacts with PBP1, MreC and EzrA.

The protein resides in the cytoplasm. In terms of biological role, divisome component that associates with the complex late in its assembly, after the Z-ring is formed, and is dependent on DivIC and PBP2B for its recruitment to the divisome. Together with EzrA, is a key component of the system that regulates PBP1 localization during cell cycle progression. Its main role could be the removal of PBP1 from the cell pole after pole maturation is completed. Also contributes to the recruitment of PBP1 to the division complex. Not essential for septum formation. This is Cell cycle protein GpsB from Bacillus cereus (strain ATCC 10987 / NRS 248).